A 215-amino-acid polypeptide reads, in one-letter code: MDGERMMLRVIDNLIVREKLTTIRCRGIDPASFRRGVTDIGRYMAYEFADTLKWREVEVETPLGTASGVEITDRDRIVLLSILRASLPFTEGVMKVFPEAEHGIIGARRSDEPPFRVSIDYIRVPELDDKILVIADPMLATGNTMIGILEALEAHGSPARTVVFNIISSRMGLDRVLQRGIDVYTCGVEEEVNDMGYIVPGLGDAGDLAFGRPSD.

Residues R84, R109, and 136 to 144 (DPMLATGNT) contribute to the 5-phospho-alpha-D-ribose 1-diphosphate site. Residues I198 and 203 to 205 (GDA) contribute to the uracil site. D204 provides a ligand contact to 5-phospho-alpha-D-ribose 1-diphosphate.

It belongs to the UPRTase family. Mg(2+) serves as cofactor.

It carries out the reaction UMP + diphosphate = 5-phospho-alpha-D-ribose 1-diphosphate + uracil. It participates in pyrimidine metabolism; UMP biosynthesis via salvage pathway; UMP from uracil: step 1/1. Its activity is regulated as follows. Allosterically activated by GTP. Catalyzes the conversion of uracil and 5-phospho-alpha-D-ribose 1-diphosphate (PRPP) to UMP and diphosphate. The chain is Uracil phosphoribosyltransferase from Methanothermobacter thermautotrophicus (strain ATCC 29096 / DSM 1053 / JCM 10044 / NBRC 100330 / Delta H) (Methanobacterium thermoautotrophicum).